Here is a 104-residue protein sequence, read N- to C-terminus: RLYYLRNGARISVSAASKLXSNMMYQYRGMGLSMGSMICGWDKKGPGLYYVDENGTRLSGNMFSTGSGNTYAYGVMDSGHRYDLSIEEAYDLGRRAIVHATHRD.

Belongs to the peptidase T1B family. As to quaternary structure, the 26S proteasome consists of a 20S proteasome core and two 19S regulatory subunits. The 20S proteasome core is composed of 28 subunits that are arranged in four stacked rings, resulting in a barrel-shaped structure. The two end rings are each formed by seven alpha subunits, and the two central rings are each formed by seven beta subunits. The catalytic chamber with the active sites is on the inside of the barrel. Component of the immunoproteasome, where it displaces the equivalent housekeeping subunit PSMB5. Component of the spermatoproteasome, a form of the proteasome specifically found in testis. Directly interacts with POMP.

The protein localises to the cytoplasm. The protein resides in the nucleus. It carries out the reaction Cleavage of peptide bonds with very broad specificity.. Its function is as follows. The proteasome is a multicatalytic proteinase complex which is characterized by its ability to cleave peptides with Arg, Phe, Tyr, Leu, and Glu adjacent to the leaving group at neutral or slightly basic pH. The proteasome has an ATP-dependent proteolytic activity. This subunit is involved in antigen processing to generate class I binding peptides. May participate in the generation of spliced peptides resulting from the ligation of two separate proteasomal cleavage products that are not contiguous in the parental protein. Required for adipocyte differentiation. The protein is Proteasome subunit beta type-8 (PSMB8) of Sus scrofa (Pig).